The sequence spans 397 residues: MSAAIYLVKGREKSVVRRHPWIFSRGIDRVEGNPQLGETVDVYGHDGKWLAKAAYSPESQIRARVWSFEKQDINRAFFVKRIQDAQLLREDVIERDGLTGYRLIAAESDGMPGVTIDRYQNFFVCQLLSAGAEHQKQNIVDALIEVFPDCNVYERSDVSVRKKEGLQETTGVLHGEMPPKSVVIEENGVKISVDIVGGHKTGFYLDQRDSRQQAMKYVKDKEVLNCFSYTGGFGLYALKGGAKRVINADVSQPALDTAKFNAELNEFDISKKRAVFLNADVFKLLREYRDQGTKFDVVIMDPPKFAESKAQLNGACRGYKDINMLAFEILKSGGTLLTYSCSGLMDLALFQKIIADAAVDAGRTVKFVERFEQAADHPVDTAYPEGFYLKGFACKVI.

Residues 2–80 enclose the PUA domain; sequence SAAIYLVKGR…QDINRAFFVK (79 aa).

Belongs to the methyltransferase superfamily. RlmI family.

The protein resides in the cytoplasm. It carries out the reaction cytidine(1962) in 23S rRNA + S-adenosyl-L-methionine = 5-methylcytidine(1962) in 23S rRNA + S-adenosyl-L-homocysteine + H(+). Specifically methylates the cytosine at position 1962 (m5C1962) of 23S rRNA. In Vibrio vulnificus (strain CMCP6), this protein is Ribosomal RNA large subunit methyltransferase I.